We begin with the raw amino-acid sequence, 49 residues long: Large ribosomal subunit protein bL33A (49 aa).

It belongs to the bacterial ribosomal protein bL33 family.

The chain is Large ribosomal subunit protein bL33A from Staphylococcus saprophyticus subsp. saprophyticus (strain ATCC 15305 / DSM 20229 / NCIMB 8711 / NCTC 7292 / S-41).